Reading from the N-terminus, the 143-residue chain is MFMGEYHHNLDSKGRLIIPAKFRVEIGDKMIFTRGMEGCIFGYPIEEWQKIEAKLAKLPLTKRSARKFTRLFYSGAMESEFDKQGRVNLTMTLKEHAALIKECVIVGVSNRIEIWSAERWNDFSEEANENYDDIAEDLDDIEL.

2 SpoVT-AbrB domains span residues 5 to 47 and 76 to 119; these read EYHH…PIEE and AMES…SAER.

It belongs to the MraZ family. In terms of assembly, forms oligomers.

It localises to the cytoplasm. The protein resides in the nucleoid. This chain is Transcriptional regulator MraZ, found in Lactobacillus johnsonii (strain CNCM I-12250 / La1 / NCC 533).